The following is a 298-amino-acid chain: Cyclin-dependent kinase 2 (298 aa).

Residue M1 is modified to N-acetylmethionine. Positions 4–286 constitute a Protein kinase domain; it reads FQKVEKIGEG…AKAALAHPFF (283 aa). Position 6 is an N6-acetyllysine (K6). 10–18 is a binding site for ATP; that stretch reads IGEGTYGVV. T14 is subject to Phosphothreonine. Y15 carries the phosphotyrosine; by WEE1 modification. Residue Y19 is modified to Phosphotyrosine. Residues K33, 81–83, and D86 contribute to the ATP site; that span reads EFL. D127 (proton acceptor) is an active-site residue. ATP is bound by residues 129–132 and D145; that span reads KPQN. Residues N132 and D145 each contribute to the Mg(2+) site. Position 160 is a phosphothreonine; by CAK and CCRK (T160).

Belongs to the protein kinase superfamily. CMGC Ser/Thr protein kinase family. CDC2/CDKX subfamily. As to quaternary structure, found in a complex with CABLES1, CCNA1 and CCNE1. Interacts with CABLES1. Interacts with UHRF2. Part of a complex consisting of UHRF2, CDK2 and CCNE1. Interacts with the Speedy/Ringo proteins SPDYA and SPDYC. Interaction with SPDYA promotes kinase activation via a conformation change that alleviates obstruction of the substrate-binding cleft by the T-loop. Found in a complex with both SPDYA and CDKN1B/KIP1. Binds to RB1 and CDK7. Binding to CDKN1A (p21) leads to CDK2/cyclin E inactivation at the G1-S phase DNA damage checkpoint, thereby arresting cells at the G1-S transition during DNA repair. Associated with PTPN6 and beta-catenin/CTNNB1. Interacts with CACUL1. May interact with CEP63. Interacts with ANKRD17. Interacts with CEBPA (when phosphorylated). Forms a ternary complex with CCNA2 and CDKN1B; CDKN1B inhibits the kinase activity of CDK2 through conformational rearrangements. Interacts with cyclins A, B1, B3, D, or E. Interacts with CDK2AP2. Requires Mg(2+) as cofactor. Phosphorylated at Thr-160 by CDK7 in a CAK complex. Phosphorylation at Thr-160 promotes kinase activity, whereas phosphorylation at Tyr-15 by WEE1 reduces slightly kinase activity. Phosphorylated on Thr-14 and Tyr-15 during S and G2 phases before being dephosphorylated by CDC25A. In terms of processing, nitrosylated after treatment with nitric oxide (DETA-NO).

The protein resides in the cytoplasm. It localises to the cytoskeleton. It is found in the microtubule organizing center. Its subcellular location is the centrosome. The protein localises to the nucleus. The protein resides in the cajal body. It localises to the endosome. The catalysed reaction is L-seryl-[protein] + ATP = O-phospho-L-seryl-[protein] + ADP + H(+). The enzyme catalyses L-threonyl-[protein] + ATP = O-phospho-L-threonyl-[protein] + ADP + H(+). With respect to regulation, phosphorylation at Thr-14 or Tyr-15 inactivates the enzyme, while phosphorylation at Thr-160 activates it. Stimulated by MYC. Inactivated by CDKN1A (p21). Its function is as follows. Serine/threonine-protein kinase involved in the control of the cell cycle; essential for meiosis, but dispensable for mitosis. Phosphorylates CABLES1, CTNNB1, CDK2AP2, ERCC6, NBN, USP37, p53/TP53, NPM1, CDK7, RB1, BRCA2, MYC, NPAT, EZH2. Triggers duplication of centrosomes and DNA. Acts at the G1-S transition to promote the E2F transcriptional program and the initiation of DNA synthesis, and modulates G2 progression; controls the timing of entry into mitosis/meiosis by controlling the subsequent activation of cyclin B/CDK1 by phosphorylation, and coordinates the activation of cyclin B/CDK1 at the centrosome and in the nucleus. Crucial role in orchestrating a fine balance between cellular proliferation, cell death, and DNA repair in embryonic stem cells (ESCs). Activity of CDK2 is maximal during S phase and G2; activated by interaction with cyclin E during the early stages of DNA synthesis to permit G1-S transition, and subsequently activated by cyclin A2 (cyclin A1 in germ cells) during the late stages of DNA replication to drive the transition from S phase to mitosis, the G2 phase. EZH2 phosphorylation promotes H3K27me3 maintenance and epigenetic gene silencing. Cyclin E/CDK2 prevents oxidative stress-mediated Ras-induced senescence by phosphorylating MYC. Involved in G1-S phase DNA damage checkpoint that prevents cells with damaged DNA from initiating mitosis; regulates homologous recombination-dependent repair by phosphorylating BRCA2, this phosphorylation is low in S phase when recombination is active, but increases as cells progress towards mitosis. In response to DNA damage, double-strand break repair by homologous recombination a reduction of CDK2-mediated BRCA2 phosphorylation. Involved in regulation of telomere repair by mediating phosphorylation of NBN. Phosphorylation of RB1 disturbs its interaction with E2F1. NPM1 phosphorylation by cyclin E/CDK2 promotes its dissociation from unduplicated centrosomes, thus initiating centrosome duplication. Cyclin E/CDK2-mediated phosphorylation of NPAT at G1-S transition and until prophase stimulates the NPAT-mediated activation of histone gene transcription during S phase. Required for vitamin D-mediated growth inhibition by being itself inactivated. Involved in the nitric oxide- (NO) mediated signaling in a nitrosylation/activation-dependent manner. USP37 is activated by phosphorylation and thus triggers G1-S transition. CTNNB1 phosphorylation regulates insulin internalization. Phosphorylates FOXP3 and negatively regulates its transcriptional activity and protein stability. Phosphorylates ERCC6 which is essential for its chromatin remodeling activity at DNA double-strand breaks. Acts as a regulator of the phosphatidylinositol 3-kinase/protein kinase B signal transduction by mediating phosphorylation of the C-terminus of protein kinase B (PKB/AKT1 and PKB/AKT2), promoting its activation. This is Cyclin-dependent kinase 2 (CDK2) from Bos taurus (Bovine).